The chain runs to 313 residues: Nucleoside diphosphate-linked moiety X motif 6 (313 aa).

One can recognise a Nudix hydrolase domain in the interval 138 to 270 (THQVGVAGAV…TSRVARLLLY (133 aa)).

Belongs to the Nudix hydrolase family. In terms of assembly, monomer and homodimer.

Its subcellular location is the cytoplasm. The protein resides in the nucleus. The protein localises to the mitochondrion. Functionally, may contribute to the regulation of cell proliferation. The protein is Nucleoside diphosphate-linked moiety X motif 6 (Nudt6) of Mus musculus (Mouse).